The primary structure comprises 263 residues: uncharacterized protein (263 aa).

Position 16-23 (16-23) interacts with ATP; it reads AKGGTGKT.

The protein to M.jannaschii MJ0547 and MJ0169.

This is an uncharacterized protein from Methanocaldococcus jannaschii (strain ATCC 43067 / DSM 2661 / JAL-1 / JCM 10045 / NBRC 100440) (Methanococcus jannaschii).